The chain runs to 519 residues: Sensory neuron membrane protein 2 (519 aa).

Topologically, residues methionine 1–lysine 7 are cytoplasmic. Residues leucine 8 to phenylalanine 28 traverse the membrane as a helical segment. Topologically, residues proline 29–glutamine 469 are extracellular. N-linked (GlcNAc...) asparagine glycans are attached at residues asparagine 44, asparagine 67, asparagine 104, asparagine 166, asparagine 229, asparagine 272, and asparagine 314. Intrachain disulfides connect cysteine 268–cysteine 338, cysteine 299–cysteine 362, and cysteine 340–cysteine 351. A helical transmembrane segment spans residues leucine 470–valine 490. Residues alanine 491–arginine 519 lie on the Cytoplasmic side of the membrane.

This sequence belongs to the CD36 family. In terms of tissue distribution, localizes to both male and female antennae but not the leg, wing, gut, head or thoracic ganglia. Detected throughout the sensory epithelium, associating with both sex-pheromone sensilla and plant-volatile sensilla. Differentially expressed among different sensilla and different neurons within a given sensillum.

It localises to the cell membrane. Plays an olfactory role that is not restricted to pheromone sensitivity. In Manduca sexta (Tobacco hawkmoth), this protein is Sensory neuron membrane protein 2.